We begin with the raw amino-acid sequence, 459 residues long: Serine--tRNA ligase (459 aa).

Residue 254-256 (TAE) coordinates L-serine. ATP-binding positions include 285–287 (RKE) and valine 301. Glutamate 308 serves as a coordination point for L-serine. Position 372–375 (372–375 (EMVS)) interacts with ATP. Residue threonine 408 participates in L-serine binding.

The protein belongs to the class-II aminoacyl-tRNA synthetase family. Type-1 seryl-tRNA synthetase subfamily. In terms of assembly, homodimer. The tRNA molecule binds across the dimer.

It is found in the cytoplasm. It catalyses the reaction tRNA(Ser) + L-serine + ATP = L-seryl-tRNA(Ser) + AMP + diphosphate + H(+). It carries out the reaction tRNA(Sec) + L-serine + ATP = L-seryl-tRNA(Sec) + AMP + diphosphate + H(+). It participates in aminoacyl-tRNA biosynthesis; selenocysteinyl-tRNA(Sec) biosynthesis; L-seryl-tRNA(Sec) from L-serine and tRNA(Sec): step 1/1. In terms of biological role, catalyzes the attachment of serine to tRNA(Ser). Is also able to aminoacylate tRNA(Sec) with serine, to form the misacylated tRNA L-seryl-tRNA(Sec), which will be further converted into selenocysteinyl-tRNA(Sec). In Staphylothermus marinus (strain ATCC 43588 / DSM 3639 / JCM 9404 / F1), this protein is Serine--tRNA ligase.